A 224-amino-acid polypeptide reads, in one-letter code: Orotate phosphoribosyltransferase (224 aa).

Position 29 (Lys29) interacts with 5-phospho-alpha-D-ribose 1-diphosphate. Orotate is bound at residue 37–38; it reads FF. 5-phospho-alpha-D-ribose 1-diphosphate contacts are provided by residues 75 to 76, Arg105, Lys106, Lys109, His111, and 130 to 138; these read YK and DDVITAGTS. Orotate contacts are provided by Thr134 and Arg162.

Belongs to the purine/pyrimidine phosphoribosyltransferase family. PyrE subfamily. As to quaternary structure, homodimer. The cofactor is Mg(2+).

The enzyme catalyses orotidine 5'-phosphate + diphosphate = orotate + 5-phospho-alpha-D-ribose 1-diphosphate. The protein operates within pyrimidine metabolism; UMP biosynthesis via de novo pathway; UMP from orotate: step 1/2. Catalyzes the transfer of a ribosyl phosphate group from 5-phosphoribose 1-diphosphate to orotate, leading to the formation of orotidine monophosphate (OMP). This Bordetella parapertussis (strain 12822 / ATCC BAA-587 / NCTC 13253) protein is Orotate phosphoribosyltransferase.